Consider the following 213-residue polypeptide: MEEGVNMDIRPTRIELIRTRRRIRLAKKGLDLLKMKRSALIYEFLQISRTIRGMKENLRKEVVEALNIIKVASVLEGSLALERIANMSSDSRINVNSRNVMGVNIPTLEVSYNLSILSDVYRTVSVPVAIDDSIRRFQKLFYDLILIVEKENSLRNLLMEIDRTKRRSNAIENILIPRLEYQAKMIKMTLDERERDTFTTLKTIKKKIEAEND.

Belongs to the V-ATPase D subunit family. In terms of assembly, has multiple subunits with at least A(3), B(3), C, D, E, F, H, I and proteolipid K(x).

The protein resides in the cell membrane. Functionally, component of the A-type ATP synthase that produces ATP from ADP in the presence of a proton gradient across the membrane. This Thermoplasma acidophilum (strain ATCC 25905 / DSM 1728 / JCM 9062 / NBRC 15155 / AMRC-C165) protein is A-type ATP synthase subunit D.